The following is a 631-amino-acid chain: Squalene--hopene cyclase (631 aa).

PFTB repeat units lie at residues 15 to 56, 61 to 102, and 241 to 282; these read LDRA…LDRV, MEKI…KYIG, and EIRA…QHPA. The active-site Proton donor is Asp376. PFTB repeat units lie at residues 400–441, 468–508, 516–557, and 574–622; these read MTKG…GEVT, IRRA…KAVG, IQKA…SQTA, and ARRG…LALG.

It belongs to the terpene cyclase/mutase family. In terms of assembly, homodimer.

Its subcellular location is the cell membrane. It carries out the reaction squalene = hop-22(29)-ene. The catalysed reaction is squalene + H2O = hopan-22-ol. It functions in the pathway secondary metabolite biosynthesis; hopanoid biosynthesis. In terms of biological role, catalyzes the cyclization of squalene to two pentacyclic triterpenes, hop-22(29)-ene and hopan-22-ol (diplopterol); hopene and hopanol are formed at a constant ratio of 5:1. Is a key enzyme of hopanoid biosynthesis; hopanoids are components of the bacterial cytoplasmic membranes that play a vital role in stabilizing the membranes. In Alicyclobacillus acidocaldarius subsp. acidocaldarius (strain ATCC 27009 / DSM 446 / BCRC 14685 / JCM 5260 / KCTC 1825 / NBRC 15652 / NCIMB 11725 / NRRL B-14509 / 104-IA) (Bacillus acidocaldarius), this protein is Squalene--hopene cyclase (shc).